A 588-amino-acid chain; its full sequence is L-fucose isomerase (588 aa).

Residues Glu-335 and Asp-359 each act as proton acceptor in the active site. Mn(2+)-binding residues include Glu-335, Asp-359, and His-525.

It belongs to the L-fucose isomerase family. Mn(2+) is required as a cofactor.

The protein resides in the cytoplasm. The enzyme catalyses L-fucose = L-fuculose. It participates in carbohydrate degradation; L-fucose degradation; L-lactaldehyde and glycerone phosphate from L-fucose: step 1/3. Functionally, converts the aldose L-fucose into the corresponding ketose L-fuculose. The chain is L-fucose isomerase from Streptococcus pneumoniae serotype 2 (strain D39 / NCTC 7466).